Here is a 437-residue protein sequence, read N- to C-terminus: uncharacterized protein (437 aa).

A helical transmembrane segment spans residues 47 to 67 (LLIILIGFILLSSISAIQIDA).

Its subcellular location is the membrane. This is an uncharacterized protein from Methanocaldococcus jannaschii (strain ATCC 43067 / DSM 2661 / JAL-1 / JCM 10045 / NBRC 100440) (Methanococcus jannaschii).